Here is a 237-residue protein sequence, read N- to C-terminus: Bax inhibitor 1 (237 aa).

At 1–29 the chain is on the cytoplasmic side; that stretch reads MNIFDRKINFDALLKFSHITPSTQQHLKK. Lys7 participates in a covalent cross-link: Glycyl lysine isopeptide (Lys-Gly) (interchain with G-Cter in ubiquitin). The helical transmembrane segment at 30 to 50 threads the bilayer; sequence VYASFALCMFVAAAGAYVHVV. The Lumenal portion of the chain corresponds to 51-52; sequence TR. The helical transmembrane segment at 53-73 threads the bilayer; sequence FIQAGLLSALGALALMICLMA. Topologically, residues 74–86 are cytoplasmic; it reads TPHSHETEQKRLG. Residues 87–107 form a helical membrane-spanning segment; it reads LLAGFAFLTGVGLGPALELCI. Residues 108-112 are Lumenal-facing; that stretch reads AINPS. The chain crosses the membrane as a helical span at residues 113-133; it reads ILPTAFMGTAMIFTCFSLSAL. The Cytoplasmic segment spans residues 134 to 139; sequence YARRRS. A helical transmembrane segment spans residues 140 to 160; that stretch reads YLFLGGILMSAMSLMFVSSLG. Topologically, residues 161-166 are lumenal; that stretch reads NLFFGS. The helical transmembrane segment at 167–187 threads the bilayer; that stretch reads IWLFQANLYMGLLVMCGFVLF. The Cytoplasmic segment spans residues 188–206; that stretch reads DTQLIIEKAEHGDKDYIWH. An intramembrane region (helical) is located at residues 207–227; the sequence is CIDLFLDFVTLFRKLMLILAF. At 228–237 the chain is on the cytoplasmic side; it reads NEKDKKKEKK.

Belongs to the BI1 family. As to quaternary structure, interacts with BCL2 and BCL2L1. Interacts with ERN1. In terms of processing, ubiquitinated by BFAR, leading to proteasomal degradation. As to expression, highly abundant in adult testis.

It is found in the endoplasmic reticulum membrane. In terms of biological role, endoplasmic reticulum (ER)-resident protein that confers cellular protection as an anti-apoptotic protein by limiting multiple stress-inducing pathways surrounding the endoplasmic reticulum and mitochondria. Inhibits the activities of the key sensor for the endoplasmic reticulum unfolded protein response IRE1alpha/ERN1 both directly and by blocking BAX/BAK binding. Modulates ER calcium homeostasis by acting as a calcium-leak channel. Negatively regulates autophagy and autophagosome formation, especially during periods of nutrient deprivation, and reduces cell survival during starvation. In Rattus norvegicus (Rat), this protein is Bax inhibitor 1 (Tmbim6).